The chain runs to 151 residues: UPF0336 protein Franean1_6066 (151 aa).

The MaoC-like domain maps to 8–127; the sequence is VGRSYTSDVP…NEVLVTSYEF (120 aa).

The protein belongs to the UPF0336 family.

This is UPF0336 protein Franean1_6066 from Parafrankia sp. (strain EAN1pec).